The sequence spans 346 residues: Phosphoribosylformylglycinamidine cyclo-ligase (346 aa).

The protein belongs to the AIR synthase family.

It is found in the cytoplasm. The enzyme catalyses 2-formamido-N(1)-(5-O-phospho-beta-D-ribosyl)acetamidine + ATP = 5-amino-1-(5-phospho-beta-D-ribosyl)imidazole + ADP + phosphate + H(+). It functions in the pathway purine metabolism; IMP biosynthesis via de novo pathway; 5-amino-1-(5-phospho-D-ribosyl)imidazole from N(2)-formyl-N(1)-(5-phospho-D-ribosyl)glycinamide: step 2/2. This chain is Phosphoribosylformylglycinamidine cyclo-ligase, found in Prochlorococcus marinus (strain NATL1A).